The primary structure comprises 458 residues: MAKMYRKLALCGGEGGQEWDDDVYEGVRKVYVGQDLNRITYIKFEYVQEDGEVVTTEYGTTNQHPKEFVIQYPDEHIIAVEGSYHQVALIATEVITSLVFKTSKGRKSPLFGPNLLGITTGTKFVFEDEGKKIVGFHGRAGDAVDALGVYFVLDTTPFPLYKLDAQGGTDGRVWDDGSYDGIKTLRIDQDNSRITYLEVEYEKDGEAKTCNHGGKGDTPSEFVLGYPDEYIKSVEATYQKPNIFSNTAITSLKFLTSKGRTSFFGYNVGKKFVLEQKGHRLVGFHGKEDAAIDALGAYFGPVPTPTPLIPSKKLPAIGGNEGVTWDDGVYDGVRKILVGQGNDGVSFVKFEYSKGKDLVPGDDHGKKTLLGAEEFVLEDGEYLMNIDGYYDKIFGVEEPIIVCLQFKTNKRESMPFGMDSGKKFSLGEEGHKIVGFHGQASDVVHSIGVTIVPITTTE.

Jacalin-type lectin domains are found at residues Y5–L153, L160–P301, and S311–P453.

It belongs to the jacalin lectin family. As to quaternary structure, component of the PYK10 complex, at least composed of PYK10/BGLU23, BGLU21, BGLU22, JAL22, JAL23, PBP1/JAL30, PBP2/JAL31, JAL32, JAL33, JAL34, JAL35, GLL22 and GLL23.

Inhibitor-type lectin that may regulate the correct polymerization and activation of BGLU23/PYK10 upon tissue damage. This is Jacalin-related lectin 22 (JAL22) from Arabidopsis thaliana (Mouse-ear cress).